We begin with the raw amino-acid sequence, 312 residues long: UDP-N-acetylenolpyruvoylglucosamine reductase (312 aa).

The region spanning 37–205 (VGGPADALVV…VCAEFALCPG (169 aa)) is the FAD-binding PCMH-type domain. Arg-185 is a catalytic residue. The active-site Proton donor is Ser-234. The active site involves Glu-304.

This sequence belongs to the MurB family. Requires FAD as cofactor.

The protein localises to the cytoplasm. It catalyses the reaction UDP-N-acetyl-alpha-D-muramate + NADP(+) = UDP-N-acetyl-3-O-(1-carboxyvinyl)-alpha-D-glucosamine + NADPH + H(+). Its pathway is cell wall biogenesis; peptidoglycan biosynthesis. Its function is as follows. Cell wall formation. This Syntrophus aciditrophicus (strain SB) protein is UDP-N-acetylenolpyruvoylglucosamine reductase.